The primary structure comprises 352 residues: Putative [LysW]-L-2-aminoadipate/[LysW]-L-glutamate phosphate reductase (352 aa).

NADP(+)-binding positions include Ser-10–Thr-13 and Ser-34–Arg-36. Cys-151 is a catalytic residue. Asn-319 serves as a coordination point for NADP(+).

It belongs to the NAGSA dehydrogenase family. Type 1 subfamily. LysY sub-subfamily.

Its subcellular location is the cytoplasm. It catalyses the reaction [amino-group carrier protein]-C-terminal-N-(1-carboxy-5-oxopentan-1-yl)-L-glutamine + phosphate + NADP(+) = [amino-group carrier protein]-C-terminal-N-(1-carboxy-5-phosphooxy-5-oxopentan-1-yl)-L-glutamine + NADPH + H(+). The enzyme catalyses [amino-group carrier protein]-C-terminal-gamma-(L-glutamyl-5-semialdehyde)-L-glutamate + phosphate + NADP(+) = [amino-group carrier protein]-C-terminal-gamma-(5-phospho-L-glutamyl)-L-glutamate + NADPH + H(+). It functions in the pathway amino-acid biosynthesis; L-lysine biosynthesis via AAA pathway; L-lysine from L-alpha-aminoadipate (Thermus route): step 3/5. Its pathway is amino-acid biosynthesis; L-arginine biosynthesis. Involved in both the arginine and lysine biosynthetic pathways. This is Putative [LysW]-L-2-aminoadipate/[LysW]-L-glutamate phosphate reductase from Pyrobaculum islandicum (strain DSM 4184 / JCM 9189 / GEO3).